The primary structure comprises 250 residues: Cobalt transport protein CbiM (250 aa).

The signal sequence occupies residues 1–26 (MNKKEKRIVAIAAAFALCFGISPAVN). 6 consecutive transmembrane segments (helical) span residues 38–58 (KYCI…YFSI), 68–88 (SITM…LKIP), 102–122 (LGAI…VLIF), 134–154 (TLGA…FGIY), 165–185 (LSGI…VTSI), and 209–229 (FAPT…VIMI).

This sequence belongs to the CbiM family. Forms an energy-coupling factor (ECF) transporter complex composed of an ATP-binding protein (A component, CbiO), a transmembrane protein (T component, CbiQ) and 2 possible substrate-capture proteins (S components, CbiM and CbiN) of unknown stoichimetry.

The protein localises to the cell membrane. Its pathway is cofactor biosynthesis; adenosylcobalamin biosynthesis. In terms of biological role, part of the energy-coupling factor (ECF) transporter complex CbiMNOQ involved in cobalt import. This Lachnoclostridium phytofermentans (strain ATCC 700394 / DSM 18823 / ISDg) (Clostridium phytofermentans) protein is Cobalt transport protein CbiM.